The primary structure comprises 1710 residues: Extracellular matrix protein A (1710 aa).

The signal sequence occupies residues 1–22 (MKISIFILLLFISSMVIISVNA). Cys-rich CT repeat units follow at residues 43–70 (NRWS…CDDE), 71–94 (NACT…VDDK), 95–117 (NPCT…CDDK), 118–141 (NACT…CDDN), 142–165 (NPCT…VDDN), 166–189 (NPCT…VDDL), 190–213 (NPCT…VDDN), 214–237 (NKCT…CDDN), 238–261 (NACT…CDDK), 262–285 (NPCT…VDDN), 286–309 (NPCT…VDDN), 310–333 (NQCT…TDDN), 334–357 (NPCT…VDDN), 358–381 (NKCT…TDDN), 382–405 (NACT…CDDK), 406–429 (KACT…CDDN), 430–453 (NPCT…VDDN), 454–477 (NPCT…VDDN), 478–501 (NKCT…TDDN), 502–525 (NACT…CDDK), 526–549 (KACT…CDDN), 550–573 (NPCT…VDDN), 574–597 (NPCT…VDDN), 598–621 (NKCT…TDDN), 622–645 (NACT…CDDS), 646–669 (NPCT…VDDN), 670–693 (NPCT…VDDN), 694–717 (NKCT…TDDN), 718–741 (NACT…CDDK), 742–765 (KACT…CDDN), 766–789 (NPCT…VDDN), 790–813 (NPCT…VDDN), 814–837 (NKCT…TDDN), 838–861 (NACT…CDDN), 862–885 (NKCT…CDDS), 886–909 (NPCT…VDDN), 910–933 (NPCT…VDDN), 934–957 (NKCT…TDDN), 958–981 (NACT…TDDN), 982–1005 (NACT…CDDS), 1006–1029 (NPCT…VDDN), 1030–1053 (NPCT…VDDN), 1054–1077 (NKCT…TDDN), 1078–1101 (NACT…CDDS), 1102–1125 (NPCT…VDDN), 1126–1149 (NPCT…VDDN), 1150–1173 (NKCT…CDDN), 1174–1197 (NACT…CDDR), 1198–1221 (NPCT…TDDS), 1222–1245 (NKCT…CDDN), 1246–1269 (NACT…CDDK), 1270–1293 (NPCT…VDDN), 1294–1317 (DKCT…CDDN), 1318–1341 (NACT…CDDS), 1342–1365 (NPCT…VDDN), 1366–1389 (NPCT…VDDN), 1390–1413 (NKCT…CDDN), 1414–1437 (NPCT…VDDN), 1438–1461 (DACT…TDDN), 1462–1485 (NKCT…CDDG), 1486–1509 (NKCT…CPKP), 1511–1534 (DKCS…CTSD), 1558–1581 (NKCQ…CDDG), 1582–1606 (NACT…LPKN), 1608–1632 (NKCI…CECD), and 1658–1682 (NPKT…VITS). N150 and N151 each carry an N-linked (GlcNAc...) asparagine glycan. N-linked (GlcNAc...) asparagine glycosylation is found at N270 and N271. N415 carries N-linked (GlcNAc...) asparagine glycosylation. A glycan (N-linked (GlcNAc...) asparagine) is linked at N535. N655 carries an N-linked (GlcNAc...) asparagine glycan. An N-linked (GlcNAc...) asparagine glycan is attached at N751. N-linked (GlcNAc...) asparagine glycosylation is found at N871, N894, and N895. N1015 carries an N-linked (GlcNAc...) asparagine glycan. N-linked (GlcNAc...) asparagine glycans are attached at residues N1110 and N1111. N-linked (GlcNAc...) asparagine glycosylation is present at N1183. N-linked (GlcNAc...) asparagine glycosylation is present at N1255. The N-linked (GlcNAc...) asparagine glycan is linked to N1351. The N-linked (GlcNAc...) asparagine glycan is linked to N1530. N1624 is a glycosylation site (N-linked (GlcNAc...) asparagine).

The protein localises to the secreted. This Dictyostelium discoideum (Social amoeba) protein is Extracellular matrix protein A (ecmA).